The primary structure comprises 496 residues: MDEDLVVALRLQEEWDVQAARRAAAREPLSLVDASWELVDPTPDLQALFLQFNDRFFWGQLEAVEVKWSVRMTLCAGICTYEGRGGMCSIRLSEPLLKLRPRKDLVETLLHEMIHAYLFVTNNDKDREGHGPEFCKHMHRINQLTGANITVYHTFHDEVDEYRRHWWRCNGPCQHKQPYYGYVKRATNRAPSAHDYWWADHQKTCGGTYIKIKEPENYAKKGRGKTKAGKQPTSAVENKDKLCRGEAQPLIPFSGKGYVLGDTSTCPSAGKLNTSHMVNDTKGLSGQDHSASGLKLDSNVEVKCEQNGLPNKKPHLVTPLPTASHQSVLSSYFPRVSVANQKAFRNVNGSPVKSGTIDGTKHSASAGAQRKVPPSRASLRNSSKVTAPASATVTSAAGTSAAISREESGSEDQFLNKRPRLEDRTALNNIKEQTQSGGDLEDSSRPTAISTPRSSGGQRRLVNCPVCQGVVLESQINEHLDRCLEGSKTNLRPRRV.

The residue at position 1 (M1) is an N-acetylmethionine. A SprT-like domain is found at 45 to 212 (LQALFLQFND…KTCGGTYIKI (168 aa)). H111 lines the Zn(2+) pocket. E112 is an active-site residue. Positions 115 and 130 each coordinate Zn(2+). An N6-acetyllysine modification is found at K230. The SHP-box signature appears at 253–261 (FSGKGYVLG). S268 is subject to Phosphoserine. Residue K303 forms a Glycyl lysine isopeptide (Lys-Gly) (interchain with G-Cter in SUMO2) linkage. Residues 326–333 (QSVLSSYF) carry the PIP-box motif. K342 is covalently cross-linked (Glycyl lysine isopeptide (Lys-Gly) (interchain with G-Cter in SUMO2); alternate). K342 participates in a covalent cross-link: Glycyl lysine isopeptide (Lys-Gly) (interchain with G-Cter in ubiquitin); alternate. The segment at 346–459 (NVNGSPVKSG…STPRSSGGQR (114 aa)) is disordered. K361 is covalently cross-linked (Glycyl lysine isopeptide (Lys-Gly) (interchain with G-Cter in SUMO2)). A compositionally biased stretch (low complexity) spans 382-403 (SSKVTAPASATVTSAAGTSAAI). Phosphoserine is present on S383. Positions 412–423 (DQFLNKRPRLED) match the Nuclear localization signal motif. Composition is skewed to polar residues over residues 426–437 (ALNNIKEQTQSG) and 445–457 (RPTA…SSGG). A Glycyl lysine isopeptide (Lys-Gly) (interchain with G-Cter in SUMO2) cross-link involves residue K431. The segment at 461–488 (LVNCPVCQGVVLESQINEHLDRCLEGSK) adopts a UBZ4-type zinc-finger fold. Residues C464, C467, H479, and C483 each contribute to the Zn(2+) site.

It belongs to the Spartan family. In terms of assembly, homodimer. Interacts (VIA PIP-box) with PCNA (when ubiquitinated). Interacts (via its SHP-box) with VCP/p97. Interacts with RAD18. Interacts with KCTD13 and POLD3. The cofactor is Zn(2+). Post-translationally, autocatalytically cleaved in response to double-stranded DNA-binding: autocatalytic cleavage takes place in trans and leads to inactivation. In terms of processing, monoubiquitinated; monoubiquitination promotes exclusion from chromatin. Deubiquitinated by VCPIP1: deubiquitination is required for subsequent acetylation and recruitment to chromatin and DNA damage sites. Acetylated following deubiquitination by VCPIP1, leading to recruitment to chromatin and DNA damage sites. Post-translationally, phosphorylation by CHEK1 promotes recruitment to chromatin.

It is found in the nucleus. Its subcellular location is the chromosome. DNA-binding activates the protease activity: single-stranded DNA-binding specifically activates ability to cleave covalent DNA-protein cross-links (DPCs). In contrast, double-stranded DNA-binding specifically activates autocatalytic cleavage, and subsequent inactivation. Functionally, DNA-dependent metalloendopeptidase that mediates the proteolytic cleavage of covalent DNA-protein cross-links (DPCs) during DNA synthesis, thereby playing a key role in maintaining genomic integrity. DPCs are highly toxic DNA lesions that interfere with essential chromatin transactions, such as replication and transcription, and which are induced by reactive agents, such as UV light or formaldehyde. Associates with the DNA replication machinery and specifically removes DPCs during DNA synthesis. Catalyzes proteolytic cleavage of the HMCES DNA-protein cross-link following unfolding by the BRIP1/FANCJ helicase. Acts as a pleiotropic protease for DNA-binding proteins cross-linked with DNA, such as TOP1, TOP2A, histones H3 and H4. Mediates degradation of DPCs that are not ubiquitinated, while it is not able to degrade ubiquitinated DPCs. SPRTN activation requires polymerase collision with DPCs followed by helicase bypass of DPCs. Involved in recruitment of VCP/p97 to sites of DNA damage. Also acts as an activator of CHEK1 during normal DNA replication by mediating proteolytic cleavage of CHEK1, thereby promoting CHEK1 removal from chromatin and subsequent activation. Does not activate CHEK1 in response to DNA damage. May also act as a 'reader' of ubiquitinated PCNA: recruited to sites of UV damage and interacts with ubiquitinated PCNA and RAD18, the E3 ubiquitin ligase that monoubiquitinates PCNA. Facilitates chromatin association of RAD18 and is required for efficient PCNA monoubiquitination, promoting a feed-forward loop to enhance PCNA ubiquitination and translesion DNA synthesis. The polypeptide is DNA-dependent metalloprotease SPRTN (Rattus norvegicus (Rat)).